Here is a 366-residue protein sequence, read N- to C-terminus: MKKILLTCLLASASFQVSSHTSEVLSGYWAYQEFLEKFPQQGVLTRELSEVVRNAPVPLKRHQSKPIRISVVFPGQQISDYWVRNLSAFEKRMDKLQISYQINQVFTRPNADVKQQSVSLMEALKSKSDYLIFTLDTTRHRKFIEHVLDSSETKLILQNITTPVQAWDKRQPFLYVGFDHAEGSIALADKFKQLYPQGANYSVLYFSEGYVSDARGDTFIHQMNHSDRFALKSSFYTKATKASGYESAKNSLERYPDVDFIYACSTDVALGAIDALKELGRTNIKINGWGGGSAELDAIAAGDLDLTVMRMNDDTGIAMAEAIKWDIEGRTVPTVFSGDFEVVTKEDSPEHIELLKKRAFRYSDQP.

Positions 1 to 13 (MKKILLTCLLASA) are cleaved as a signal peptide.

The protein belongs to the bacterial solute-binding protein 2 family.

Its subcellular location is the periplasm. Its function is as follows. Binds to an autoinducer molecule. This complex then interacts with the LuxQ sensor protein. The polypeptide is Autoinducer 2-binding periplasmic protein LuxP (luxP) (Vibrio vulnificus (strain CMCP6)).